Consider the following 172-residue polypeptide: uncharacterized protein (172 aa).

This is an uncharacterized protein from Aquifex aeolicus (strain VF5).